A 227-amino-acid polypeptide reads, in one-letter code: Lipoprotein-releasing system ATP-binding protein LolD (227 aa).

Positions 6–227 constitute an ABC transporter domain; the sequence is LEMRGITKSY…RLDAGQLSDV (222 aa). An ATP-binding site is contributed by 43-50; sequence APSGAGKS.

It belongs to the ABC transporter superfamily. Lipoprotein translocase (TC 3.A.1.125) family. The complex is composed of two ATP-binding proteins (LolD) and two transmembrane proteins (LolC and LolE).

The protein localises to the cell inner membrane. Part of the ABC transporter complex LolCDE involved in the translocation of mature outer membrane-directed lipoproteins, from the inner membrane to the periplasmic chaperone, LolA. Responsible for the formation of the LolA-lipoprotein complex in an ATP-dependent manner. The sequence is that of Lipoprotein-releasing system ATP-binding protein LolD from Roseobacter denitrificans (strain ATCC 33942 / OCh 114) (Erythrobacter sp. (strain OCh 114)).